The sequence spans 392 residues: Succinate--CoA ligase [ADP-forming] subunit beta (392 aa).

The region spanning 9–247 (KAILRKYGVA…VTEEDPLEVE (239 aa)) is the ATP-grasp domain. Residues K49, 56–58 (GRG), E102, L105, and E110 contribute to the ATP site. Positions 202 and 216 each coordinate Mg(2+). Residues N267 and 324–326 (GIL) contribute to the substrate site.

This sequence belongs to the succinate/malate CoA ligase beta subunit family. Heterotetramer of two alpha and two beta subunits. Requires Mg(2+) as cofactor.

It carries out the reaction succinate + ATP + CoA = succinyl-CoA + ADP + phosphate. It catalyses the reaction GTP + succinate + CoA = succinyl-CoA + GDP + phosphate. It participates in carbohydrate metabolism; tricarboxylic acid cycle; succinate from succinyl-CoA (ligase route): step 1/1. In terms of biological role, succinyl-CoA synthetase functions in the citric acid cycle (TCA), coupling the hydrolysis of succinyl-CoA to the synthesis of either ATP or GTP and thus represents the only step of substrate-level phosphorylation in the TCA. The beta subunit provides nucleotide specificity of the enzyme and binds the substrate succinate, while the binding sites for coenzyme A and phosphate are found in the alpha subunit. The chain is Succinate--CoA ligase [ADP-forming] subunit beta from Koribacter versatilis (strain Ellin345).